Reading from the N-terminus, the 401-residue chain is CCA-adding enzyme (401 aa).

Positions 32 and 35 each coordinate ATP. CTP contacts are provided by G32 and R35. Positions 45 and 47 each coordinate Mg(2+). 5 residues coordinate ATP: R116, D159, R162, R165, and R168. Residues R116, D159, R162, R165, and R168 each coordinate CTP.

It belongs to the tRNA nucleotidyltransferase/poly(A) polymerase family. Bacterial CCA-adding enzyme type 3 subfamily. As to quaternary structure, homodimer. Requires Mg(2+) as cofactor.

It carries out the reaction a tRNA precursor + 2 CTP + ATP = a tRNA with a 3' CCA end + 3 diphosphate. The catalysed reaction is a tRNA with a 3' CCA end + 2 CTP + ATP = a tRNA with a 3' CCACCA end + 3 diphosphate. In terms of biological role, catalyzes the addition and repair of the essential 3'-terminal CCA sequence in tRNAs without using a nucleic acid template. Adds these three nucleotides in the order of C, C, and A to the tRNA nucleotide-73, using CTP and ATP as substrates and producing inorganic pyrophosphate. tRNA 3'-terminal CCA addition is required both for tRNA processing and repair. Also involved in tRNA surveillance by mediating tandem CCA addition to generate a CCACCA at the 3' terminus of unstable tRNAs. While stable tRNAs receive only 3'-terminal CCA, unstable tRNAs are marked with CCACCA and rapidly degraded. The polypeptide is CCA-adding enzyme (Leuconostoc mesenteroides subsp. mesenteroides (strain ATCC 8293 / DSM 20343 / BCRC 11652 / CCM 1803 / JCM 6124 / NCDO 523 / NBRC 100496 / NCIMB 8023 / NCTC 12954 / NRRL B-1118 / 37Y)).